Consider the following 205-residue polypeptide: Large ribosomal subunit protein eL15 (205 aa).

Disordered regions lie at residues 70-90 (GRKR…HGVN) and 172-197 (RGLR…KRRN).

It belongs to the eukaryotic ribosomal protein eL15 family.

The chain is Large ribosomal subunit protein eL15 (rpl15-1) from Dictyostelium discoideum (Social amoeba).